A 301-amino-acid chain; its full sequence is ATP synthase gamma chain (301 aa).

The protein belongs to the ATPase gamma chain family. In terms of assembly, F-type ATPases have 2 components, CF(1) - the catalytic core - and CF(0) - the membrane proton channel. CF(1) has five subunits: alpha(3), beta(3), gamma(1), delta(1), epsilon(1). CF(0) has three main subunits: a, b and c.

Its subcellular location is the cell inner membrane. In terms of biological role, produces ATP from ADP in the presence of a proton gradient across the membrane. The gamma chain is believed to be important in regulating ATPase activity and the flow of protons through the CF(0) complex. This Bordetella avium (strain 197N) protein is ATP synthase gamma chain.